We begin with the raw amino-acid sequence, 413 residues long: MVDLIVGLQWGDEGKGKIVDLVAKNYDIVIRSQGGHNAGHTVVVDGKKYALHLLPSGVLNPNATNVIGNGVVVYPKQLIKEIRSFEHNIKEKLLISDKAHMILDHHIAIDQAREKLRGKNAIGTTGRGIGPAYADKIARVGVRMGELRNIPKLIEKLVHYYEMNKGYFDYLGIEIPSISKLEEELKEYKQELGSLITNTTQYLWDNMDKNMLLEGAQATLLDIDHGTYPYVTSSNTIASGALTGSGIAPKNLNKVIGIAKAYATRVGNGPFPTEDDGKAGDKIREQGGEYGTTTGRPRRCGWFDVVAARYAVTLNGCDEVAVMKLDVLDGFDKVKVCVGYEIDGEKIDYFPSELDDVKPVYVELDGWDGSVHVTKWEDLPKNAQKYIEFIEEKIGTKIKYVSTGAERNATVIR.

GTP contacts are provided by residues 11 to 17 and 39 to 41; these read GDEGKGK and GHT. The active-site Proton acceptor is the D12. Mg(2+) contacts are provided by D12 and G39. IMP contacts are provided by residues 12-15, 37-40, T125, R139, Q217, T232, and R296; these read DEGK and NAGH. Residue H40 is the Proton donor of the active site. Position 292–298 (292–298) interacts with substrate; it reads TTTGRPR. Residues R298, 324–326, and 402–404 each bind GTP; these read KLD and STG.

The protein belongs to the adenylosuccinate synthetase family. Homodimer. Mg(2+) serves as cofactor.

The protein localises to the cytoplasm. It catalyses the reaction IMP + L-aspartate + GTP = N(6)-(1,2-dicarboxyethyl)-AMP + GDP + phosphate + 2 H(+). It participates in purine metabolism; AMP biosynthesis via de novo pathway; AMP from IMP: step 1/2. Functionally, plays an important role in the de novo pathway of purine nucleotide biosynthesis. Catalyzes the first committed step in the biosynthesis of AMP from IMP. This is Adenylosuccinate synthetase from Nautilia profundicola (strain ATCC BAA-1463 / DSM 18972 / AmH).